A 464-amino-acid chain; its full sequence is ATP-dependent protease ATPase subunit HslU (464 aa).

ATP contacts are provided by residues Ile19, 61 to 66, Asp277, Glu342, and Arg414; that span reads GVGKTE.

This sequence belongs to the ClpX chaperone family. HslU subfamily. In terms of assembly, a double ring-shaped homohexamer of HslV is capped on each side by a ring-shaped HslU homohexamer. The assembly of the HslU/HslV complex is dependent on binding of ATP.

The protein resides in the cytoplasm. In terms of biological role, ATPase subunit of a proteasome-like degradation complex; this subunit has chaperone activity. The binding of ATP and its subsequent hydrolysis by HslU are essential for unfolding of protein substrates subsequently hydrolyzed by HslV. HslU recognizes the N-terminal part of its protein substrates and unfolds these before they are guided to HslV for hydrolysis. This Lactobacillus gasseri (strain ATCC 33323 / DSM 20243 / BCRC 14619 / CIP 102991 / JCM 1131 / KCTC 3163 / NCIMB 11718 / NCTC 13722 / AM63) protein is ATP-dependent protease ATPase subunit HslU.